A 201-amino-acid polypeptide reads, in one-letter code: Molybdenum cofactor guanylyltransferase (201 aa).

Residues 15–17, Lys-28, Asp-74, and Asp-104 each bind GTP; that span reads LAG. Asp-104 lines the Mg(2+) pocket.

The protein belongs to the MobA family. As to quaternary structure, monomer. Mg(2+) is required as a cofactor.

Its subcellular location is the cytoplasm. The enzyme catalyses Mo-molybdopterin + GTP + H(+) = Mo-molybdopterin guanine dinucleotide + diphosphate. Its function is as follows. Transfers a GMP moiety from GTP to Mo-molybdopterin (Mo-MPT) cofactor (Moco or molybdenum cofactor) to form Mo-molybdopterin guanine dinucleotide (Mo-MGD) cofactor. This chain is Molybdenum cofactor guanylyltransferase, found in Pseudomonas syringae pv. tomato (strain ATCC BAA-871 / DC3000).